The sequence spans 273 residues: Ribosomal RNA small subunit methyltransferase A (273 aa).

S-adenosyl-L-methionine-binding residues include N17, L19, G44, E65, and N111.

Belongs to the class I-like SAM-binding methyltransferase superfamily. rRNA adenine N(6)-methyltransferase family. RsmA subfamily.

It is found in the cytoplasm. The enzyme catalyses adenosine(1518)/adenosine(1519) in 16S rRNA + 4 S-adenosyl-L-methionine = N(6)-dimethyladenosine(1518)/N(6)-dimethyladenosine(1519) in 16S rRNA + 4 S-adenosyl-L-homocysteine + 4 H(+). Functionally, specifically dimethylates two adjacent adenosines (A1518 and A1519) in the loop of a conserved hairpin near the 3'-end of 16S rRNA in the 30S particle. May play a critical role in biogenesis of 30S subunits. The chain is Ribosomal RNA small subunit methyltransferase A from Buchnera aphidicola subsp. Acyrthosiphon pisum (strain APS) (Acyrthosiphon pisum symbiotic bacterium).